The sequence spans 128 residues: Class I hydrophobin 19 (128 aa).

4 cysteine pairs are disulfide-bonded: Cys48/Cys107, Cys55/Cys101, Cys56/Cys88, and Cys108/Cys121. Asn110 is a glycosylation site (N-linked (GlcNAc...) asparagine).

The protein belongs to the fungal hydrophobin family. Self-assembles to form functional amyloid fibrils called rodlets. Self-assembly into fibrillar rodlets occurs spontaneously at hydrophobic:hydrophilic interfaces and the rodlets further associate laterally to form amphipathic monolayers.

It localises to the secreted. It is found in the cell wall. In terms of biological role, aerial growth, conidiation, and dispersal of filamentous fungi in the environment rely upon a capability of their secreting small amphipathic proteins called hydrophobins (HPBs) with low sequence identity. Class I can self-assemble into an outermost layer of rodlet bundles on aerial cell surfaces, conferring cellular hydrophobicity that supports fungal growth, development and dispersal; whereas Class II form highly ordered films at water-air interfaces through intermolecular interactions but contribute nothing to the rodlet structure. This is Class I hydrophobin 19 from Pleurotus ostreatus (strain PC15) (Oyster mushroom).